Here is a 323-residue protein sequence, read N- to C-terminus: Glutamyl-Q tRNA(Asp) synthetase (323 aa).

Residues 5 to 9 and E41 each bind L-glutamate; that span reads RFAPT. Residues 8–18 carry the 'HIGH' region motif; sequence PTPSGALHLGN. Residues C105, C107, Y129, and C133 each coordinate Zn(2+). Residues Y193 and R211 each coordinate L-glutamate. Residues 249–253 carry the 'KMSKS' region motif; the sequence is RLAKR. An ATP-binding site is contributed by K252.

This sequence belongs to the class-I aminoacyl-tRNA synthetase family. GluQ subfamily. The cofactor is Zn(2+).

In terms of biological role, catalyzes the tRNA-independent activation of glutamate in presence of ATP and the subsequent transfer of glutamate onto a tRNA(Asp). Glutamate is transferred on the 2-amino-5-(4,5-dihydroxy-2-cyclopenten-1-yl) moiety of the queuosine in the wobble position of the QUC anticodon. This chain is Glutamyl-Q tRNA(Asp) synthetase, found in Symbiobacterium thermophilum (strain DSM 24528 / JCM 14929 / IAM 14863 / T).